We begin with the raw amino-acid sequence, 370 residues long: Protein FAM110B (370 aa).

Disordered regions lie at residues 127–151 and 237–256; these read SSEG…RSEA and KSPE…RPSL. 2 positions are modified to phosphoserine: Ser238 and Ser301. The segment at 317-337 is disordered; it reads DCEQSQDSNSDLRNDDSANDR. Positions 326–335 are enriched in basic and acidic residues; that stretch reads SDLRNDDSAN.

It belongs to the FAM110 family. In terms of tissue distribution, detected in thyroid, spleen and testis, and at lower levels in stomach, spinal cord, lymph node, trachea, adrenal gland, prostate, ovary and intestine.

It localises to the cytoplasm. Its subcellular location is the cytoskeleton. The protein resides in the microtubule organizing center. It is found in the centrosome. In terms of biological role, may be involved in tumor progression. The sequence is that of Protein FAM110B (FAM110B) from Homo sapiens (Human).